We begin with the raw amino-acid sequence, 906 residues long: Protein translocase subunit SecA (906 aa).

Residues Gln86, 104–108 (GEGKT), and Asp499 each bind ATP. Residues 834–847 (KLQKNMRESREDPA) show a composition bias toward basic and acidic residues. Residues 834-887 (KLQKNMRESREDPAFSKYNAGSSLETDLKPVVSRVDPKDRNPDDPTSWGRVSRN) are disordered. Residues Cys890, Cys892, Cys901, and His902 each contribute to the Zn(2+) site.

This sequence belongs to the SecA family. Monomer and homodimer. Part of the essential Sec protein translocation apparatus which comprises SecA, SecYEG and auxiliary proteins SecDF-YajC and YidC. Zn(2+) is required as a cofactor.

The protein resides in the cell inner membrane. Its subcellular location is the cytoplasm. The enzyme catalyses ATP + H2O + cellular proteinSide 1 = ADP + phosphate + cellular proteinSide 2.. Functionally, part of the Sec protein translocase complex. Interacts with the SecYEG preprotein conducting channel. Has a central role in coupling the hydrolysis of ATP to the transfer of proteins into and across the cell membrane, serving both as a receptor for the preprotein-SecB complex and as an ATP-driven molecular motor driving the stepwise translocation of polypeptide chains across the membrane. The chain is Protein translocase subunit SecA from Rickettsia felis (strain ATCC VR-1525 / URRWXCal2) (Rickettsia azadi).